The primary structure comprises 315 residues: Acetyl-coenzyme A carboxylase carboxyl transferase subunit alpha (315 aa).

Residues 39-292 (LEDKSAKLLR…GDALEQELNG (254 aa)) form the CoA carboxyltransferase C-terminal domain.

This sequence belongs to the AccA family. As to quaternary structure, acetyl-CoA carboxylase is a heterohexamer composed of biotin carboxyl carrier protein (AccB), biotin carboxylase (AccC) and two subunits each of ACCase subunit alpha (AccA) and ACCase subunit beta (AccD).

The protein resides in the cytoplasm. It carries out the reaction N(6)-carboxybiotinyl-L-lysyl-[protein] + acetyl-CoA = N(6)-biotinyl-L-lysyl-[protein] + malonyl-CoA. The protein operates within lipid metabolism; malonyl-CoA biosynthesis; malonyl-CoA from acetyl-CoA: step 1/1. Its function is as follows. Component of the acetyl coenzyme A carboxylase (ACC) complex. First, biotin carboxylase catalyzes the carboxylation of biotin on its carrier protein (BCCP) and then the CO(2) group is transferred by the carboxyltransferase to acetyl-CoA to form malonyl-CoA. The protein is Acetyl-coenzyme A carboxylase carboxyl transferase subunit alpha of Sphingopyxis alaskensis (strain DSM 13593 / LMG 18877 / RB2256) (Sphingomonas alaskensis).